A 393-amino-acid polypeptide reads, in one-letter code: Acetyl-CoA acetyltransferase (393 aa).

C90 functions as the Acyl-thioester intermediate in the catalytic mechanism. Residues H349 and C379 each act as proton acceptor in the active site.

Belongs to the thiolase-like superfamily. Thiolase family. Homotetramer.

It localises to the cytoplasm. The enzyme catalyses 2 acetyl-CoA = acetoacetyl-CoA + CoA. It functions in the pathway biopolymer metabolism; poly-(R)-3-hydroxybutanoate biosynthesis. It participates in metabolic intermediate biosynthesis; (R)-mevalonate biosynthesis; (R)-mevalonate from acetyl-CoA: step 1/3. The protein is Acetyl-CoA acetyltransferase of Rhizobium meliloti (strain 1021) (Ensifer meliloti).